The primary structure comprises 168 residues: Gastrula zinc finger protein XlCGF42.1 (168 aa).

6 consecutive C2H2-type zinc fingers follow at residues 6-28 (YSCS…RKSH), 34-56 (FCCS…YRTH), 62-84 (CICS…QKYH), 90-112 (FSCS…LRIH), 118-140 (YTCT…LRIH), and 146-165 (FTCS…DRHH).

This sequence belongs to the krueppel C2H2-type zinc-finger protein family.

The protein localises to the nucleus. Functionally, may be involved in transcriptional regulation. This chain is Gastrula zinc finger protein XlCGF42.1, found in Xenopus laevis (African clawed frog).